The sequence spans 243 residues: 1-(5-phosphoribosyl)-5-[(5-phosphoribosylamino)methylideneamino] imidazole-4-carboxamide isomerase (243 aa).

Asp8 (proton acceptor) is an active-site residue. Asp129 functions as the Proton donor in the catalytic mechanism.

Belongs to the HisA/HisF family.

The protein localises to the cytoplasm. The enzyme catalyses 1-(5-phospho-beta-D-ribosyl)-5-[(5-phospho-beta-D-ribosylamino)methylideneamino]imidazole-4-carboxamide = 5-[(5-phospho-1-deoxy-D-ribulos-1-ylimino)methylamino]-1-(5-phospho-beta-D-ribosyl)imidazole-4-carboxamide. It participates in amino-acid biosynthesis; L-histidine biosynthesis; L-histidine from 5-phospho-alpha-D-ribose 1-diphosphate: step 4/9. The chain is 1-(5-phosphoribosyl)-5-[(5-phosphoribosylamino)methylideneamino] imidazole-4-carboxamide isomerase from Geobacter sp. (strain M21).